The following is a 222-amino-acid chain: Thiamine-phosphate synthase (222 aa).

4-amino-2-methyl-5-(diphosphooxymethyl)pyrimidine contacts are provided by residues 42-46 (QYRDK) and asparagine 74. Mg(2+)-binding residues include aspartate 75 and aspartate 94. Threonine 113 is a binding site for 4-amino-2-methyl-5-(diphosphooxymethyl)pyrimidine. 140–142 (SAT) is a binding site for 2-[(2R,5Z)-2-carboxy-4-methylthiazol-5(2H)-ylidene]ethyl phosphate. Position 143 (lysine 143) interacts with 4-amino-2-methyl-5-(diphosphooxymethyl)pyrimidine. Position 169 (glycine 169) interacts with 2-[(2R,5Z)-2-carboxy-4-methylthiazol-5(2H)-ylidene]ethyl phosphate.

The protein belongs to the thiamine-phosphate synthase family. Mg(2+) is required as a cofactor.

It catalyses the reaction 2-[(2R,5Z)-2-carboxy-4-methylthiazol-5(2H)-ylidene]ethyl phosphate + 4-amino-2-methyl-5-(diphosphooxymethyl)pyrimidine + 2 H(+) = thiamine phosphate + CO2 + diphosphate. The catalysed reaction is 2-(2-carboxy-4-methylthiazol-5-yl)ethyl phosphate + 4-amino-2-methyl-5-(diphosphooxymethyl)pyrimidine + 2 H(+) = thiamine phosphate + CO2 + diphosphate. It carries out the reaction 4-methyl-5-(2-phosphooxyethyl)-thiazole + 4-amino-2-methyl-5-(diphosphooxymethyl)pyrimidine + H(+) = thiamine phosphate + diphosphate. The protein operates within cofactor biosynthesis; thiamine diphosphate biosynthesis; thiamine phosphate from 4-amino-2-methyl-5-diphosphomethylpyrimidine and 4-methyl-5-(2-phosphoethyl)-thiazole: step 1/1. Its function is as follows. Condenses 4-methyl-5-(beta-hydroxyethyl)thiazole monophosphate (THZ-P) and 2-methyl-4-amino-5-hydroxymethyl pyrimidine pyrophosphate (HMP-PP) to form thiamine monophosphate (TMP). The protein is Thiamine-phosphate synthase of Marinobacter nauticus (strain ATCC 700491 / DSM 11845 / VT8) (Marinobacter aquaeolei).